Consider the following 373-residue polypeptide: Chaperone protein DnaJ (373 aa).

The region spanning 5 to 70 (DYYEVLGVHR…QQRVIYDQYG (66 aa)) is the J domain. Residues 136–214 (GLETKIQIPR…CHGSGRVRGK (79 aa)) form a CR-type zinc finger. Zn(2+) is bound by residues C149, C152, C166, C169, C188, C191, C202, and C205. CXXCXGXG motif repeat units follow at residues 149–156 (CGTCDGIG), 166–173 (CPTCQGAG), 188–195 (CPECNGEG), and 202–209 (CEECHGSG).

This sequence belongs to the DnaJ family. As to quaternary structure, homodimer. The cofactor is Zn(2+).

It localises to the cytoplasm. In terms of biological role, participates actively in the response to hyperosmotic and heat shock by preventing the aggregation of stress-denatured proteins and by disaggregating proteins, also in an autonomous, DnaK-independent fashion. Unfolded proteins bind initially to DnaJ; upon interaction with the DnaJ-bound protein, DnaK hydrolyzes its bound ATP, resulting in the formation of a stable complex. GrpE releases ADP from DnaK; ATP binding to DnaK triggers the release of the substrate protein, thus completing the reaction cycle. Several rounds of ATP-dependent interactions between DnaJ, DnaK and GrpE are required for fully efficient folding. Also involved, together with DnaK and GrpE, in the DNA replication of plasmids through activation of initiation proteins. This Syntrophotalea carbinolica (strain DSM 2380 / NBRC 103641 / GraBd1) (Pelobacter carbinolicus) protein is Chaperone protein DnaJ.